Here is a 268-residue protein sequence, read N- to C-terminus: Thiazole synthase (268 aa).

Residue K108 is the Schiff-base intermediate with DXP of the active site. Residues G169, 195–196 (AG), and 217–218 (NS) each bind 1-deoxy-D-xylulose 5-phosphate. Residues 248 to 268 (RLKENPLASPSSPLEGVISNN) form a disordered region. The span at 255–268 (ASPSSPLEGVISNN) shows a compositional bias: polar residues.

The protein belongs to the ThiG family. In terms of assembly, homotetramer. Forms heterodimers with either ThiH or ThiS.

It localises to the cytoplasm. It catalyses the reaction [ThiS sulfur-carrier protein]-C-terminal-Gly-aminoethanethioate + 2-iminoacetate + 1-deoxy-D-xylulose 5-phosphate = [ThiS sulfur-carrier protein]-C-terminal Gly-Gly + 2-[(2R,5Z)-2-carboxy-4-methylthiazol-5(2H)-ylidene]ethyl phosphate + 2 H2O + H(+). It participates in cofactor biosynthesis; thiamine diphosphate biosynthesis. In terms of biological role, catalyzes the rearrangement of 1-deoxy-D-xylulose 5-phosphate (DXP) to produce the thiazole phosphate moiety of thiamine. Sulfur is provided by the thiocarboxylate moiety of the carrier protein ThiS. In vitro, sulfur can be provided by H(2)S. The sequence is that of Thiazole synthase from Prochlorococcus marinus (strain NATL1A).